Here is a 123-residue protein sequence, read N- to C-terminus: Ribonuclease P protein component (123 aa).

This sequence belongs to the RnpA family. In terms of assembly, consists of a catalytic RNA component (M1 or rnpB) and a protein subunit.

The enzyme catalyses Endonucleolytic cleavage of RNA, removing 5'-extranucleotides from tRNA precursor.. In terms of biological role, RNaseP catalyzes the removal of the 5'-leader sequence from pre-tRNA to produce the mature 5'-terminus. It can also cleave other RNA substrates such as 4.5S RNA. The protein component plays an auxiliary but essential role in vivo by binding to the 5'-leader sequence and broadening the substrate specificity of the ribozyme. The sequence is that of Ribonuclease P protein component from Herpetosiphon aurantiacus (strain ATCC 23779 / DSM 785 / 114-95).